An 831-amino-acid chain; its full sequence is Cation/H(+) symporter 13 (831 aa).

Transmembrane regions (helical) follow at residues 50 to 70, 89 to 109, 112 to 132, 147 to 167, 214 to 234, 250 to 270, 282 to 302, 303 to 323, 334 to 354, 364 to 384, 397 to 417, and 430 to 450; these read YALP…RLIF, VVLG…FLPA, KIII…LLGL, ILIG…TIMF, LATH…LAFN, MIIG…VWLT, VVPF…GEAM, GVHA…GPPL, FASN…TNFF, VVMI…GTAA, LCLA…TIVW, and LVII…VYLY.

It belongs to the monovalent cation:proton antiporter 2 (CPA2) transporter (TC 2.A.37) family. CHX (TC 2.A.37.4) subfamily. Preferentially expressed in pollen before and after germination. Detected in pollen grains within anthers of the flower buds or in pollen on fully open flowers and on the stigma, and in pollen tubes growing in the style. Weakly expressed in roots.

The protein localises to the cell membrane. In terms of biological role, high-affinity potassium transporter that plays a role in K(+) acquisition. May operate as a K(+)/H(+) symporter. The polypeptide is Cation/H(+) symporter 13 (CHX13) (Arabidopsis thaliana (Mouse-ear cress)).